A 185-amino-acid polypeptide reads, in one-letter code: MIEETLLEAGEKMDKAVEVAKDDFASIRTGRANPALYNKVIVEYYGTPTPLQQLASFGVPDARTILITPYDKTALRDIEKALSDSEVGANPSNDGNVIRVTIPELTKERRKEYVKIVKGKGEDAKVSIRSIRRKAKDSLDKLVKDGEAGEDEGARAEKELDALTKQHVDSIDELLKRKEAELLEV.

Residues Leu142 to Asp161 form a disordered region.

This sequence belongs to the RRF family.

The protein resides in the cytoplasm. Its function is as follows. Responsible for the release of ribosomes from messenger RNA at the termination of protein biosynthesis. May increase the efficiency of translation by recycling ribosomes from one round of translation to another. The protein is Ribosome-recycling factor of Paenarthrobacter aurescens (strain TC1).